The sequence spans 214 residues: Adenylate kinase (214 aa).

10-15 provides a ligand contact to ATP; sequence GAGKGT. Positions 30-59 are NMP; it reads STGDMLRAAIKAGSELGNKAKAVMDAGQLV. AMP-binding positions include threonine 31, arginine 36, 57 to 59, 85 to 88, and glutamine 92; these read QLV and GFPR. An LID region spans residues 122-159; sequence GRRVHSGSGRVYHLVYNPPKVEGKDDVSGDDLSIRPDD. ATP contacts are provided by residues arginine 123 and 132-133; that span reads VY. AMP is bound by residues arginine 156 and arginine 167. Glutamine 200 is an ATP binding site.

The protein belongs to the adenylate kinase family. As to quaternary structure, monomer.

The protein localises to the cytoplasm. The enzyme catalyses AMP + ATP = 2 ADP. Its pathway is purine metabolism; AMP biosynthesis via salvage pathway; AMP from ADP: step 1/1. Functionally, catalyzes the reversible transfer of the terminal phosphate group between ATP and AMP. Plays an important role in cellular energy homeostasis and in adenine nucleotide metabolism. The polypeptide is Adenylate kinase (Colwellia psychrerythraea (strain 34H / ATCC BAA-681) (Vibrio psychroerythus)).